We begin with the raw amino-acid sequence, 206 residues long: UPF0301 protein Msil_1255 (206 aa).

It belongs to the UPF0301 (AlgH) family.

The chain is UPF0301 protein Msil_1255 from Methylocella silvestris (strain DSM 15510 / CIP 108128 / LMG 27833 / NCIMB 13906 / BL2).